Here is a 460-residue protein sequence, read N- to C-terminus: MLO-like protein 9 (460 aa).

Over 1–21 (MAGGGGGGGGEGPRQLDQTPT) the chain is Extracellular. A helical transmembrane segment spans residues 22 to 42 (WAVSTVCGVIILISIILELII). At 43–67 (HKVGEVFERKKKKALFEALEKIKNE) the chain is on the cytoplasmic side. The chain crosses the membrane as a helical span at residues 68-88 (LMVLGFISLLLTFGQNYIASI). Residues 89–158 (CVPSRYGHAM…ISLNALHQVH (70 aa)) lie on the Extracellular side of the membrane. Residues 159-179 (IFIFFLAVFHVIYSAITMMLG) form a helical membrane-spanning segment. Topologically, residues 180–289 (RAKIRGWKVW…KVVVGIRPEL (110 aa)) are cytoplasmic. A helical transmembrane segment spans residues 290–310 (WAFVMLFLLFDVHGWYVTAVI). At 311–315 (TMIPP) the chain is on the extracellular side. The helical transmembrane segment at 316 to 336 (LLTLAIGTKLQAIISYMALEI) threads the bilayer. Residues 337 to 366 (QERHAVIQGMPVVNVSDQHFWFEKPDLVLH) lie on the Cytoplasmic side of the membrane. A helical transmembrane segment spans residues 367-387 (MIHFVLFQNAFEITYFFWIWY). Residues 388 to 398 (EFGLRSCFHHH) are Extracellular-facing. A helical transmembrane segment spans residues 399 to 419 (FGLIIIRVCLGVGVQFLCSYI). Residues 420–460 (TLPLYALVTQMGSTMKRSVFDEQTSKALEQWHKKARKKNEK) lie on the Cytoplasmic side of the membrane. A calmodulin-binding region spans residues 441-460 (EQTSKALEQWHKKARKKNEK).

This sequence belongs to the MLO family.

It localises to the membrane. In terms of biological role, may be involved in modulation of pathogen defense and leaf cell death. Activity seems to be regulated by Ca(2+)-dependent calmodulin binding and seems not to require heterotrimeric G proteins. The protein is MLO-like protein 9 (MLO9) of Arabidopsis thaliana (Mouse-ear cress).